The primary structure comprises 318 residues: Methionyl-tRNA formyltransferase (318 aa).

112–115 is a binding site for (6S)-5,6,7,8-tetrahydrofolate; that stretch reads SILP.

The protein belongs to the Fmt family.

It catalyses the reaction L-methionyl-tRNA(fMet) + (6R)-10-formyltetrahydrofolate = N-formyl-L-methionyl-tRNA(fMet) + (6S)-5,6,7,8-tetrahydrofolate + H(+). Its function is as follows. Attaches a formyl group to the free amino group of methionyl-tRNA(fMet). The formyl group appears to play a dual role in the initiator identity of N-formylmethionyl-tRNA by promoting its recognition by IF2 and preventing the misappropriation of this tRNA by the elongation apparatus. The protein is Methionyl-tRNA formyltransferase of Shewanella sp. (strain ANA-3).